A 310-amino-acid chain; its full sequence is MIIVTGGAGFIGSNIVKALNDKGITDILVVDNLKDGTKFVNLVDLDIADYMDKEDFLIQIMAGEEFGDVEAIFHEGACSSTTEWDGKYMMDNNYQYSKELLHYCLEREIPFLYASSAATYGGRTSDFIESREYEKPLNVYGYSKFLFDEYVRQILPEANSQIVGFRYFNVYGPREGHKGSMASVAFHLNTQLNNGESPKLFEGSENFKRDFVYVGDVADVNLWFLENGVSGIFNLGTGRAESFQAVADATLAYHKKGQIEYIPFPDKLKGRYQAFTQADLTNLRAAGYDKPFKTVAEGVTEYMAWLNRDA.

NADP(+) contacts are provided by residues 10–11 (FI), 31–32 (DN), K38, K53, 75–79 (EGACS), and N92. Y140 functions as the Proton acceptor in the catalytic mechanism. K144 is an NADP(+) binding site. N169 serves as a coordination point for substrate. Residues V170 and K178 each contribute to the NADP(+) site. The Proton acceptor role is filled by K178. Substrate contacts are provided by residues S180, H187, 201–204 (FEGS), and R209. K267 carries the N6-acetyllysine modification. Residue Y272 participates in substrate binding.

This sequence belongs to the NAD(P)-dependent epimerase/dehydratase family. HldD subfamily. In terms of assembly, homopentamer. The cofactor is NADP(+).

The catalysed reaction is ADP-D-glycero-beta-D-manno-heptose = ADP-L-glycero-beta-D-manno-heptose. It participates in nucleotide-sugar biosynthesis; ADP-L-glycero-beta-D-manno-heptose biosynthesis; ADP-L-glycero-beta-D-manno-heptose from D-glycero-beta-D-manno-heptose 7-phosphate: step 4/4. In terms of biological role, catalyzes the interconversion between ADP-D-glycero-beta-D-manno-heptose and ADP-L-glycero-beta-D-manno-heptose via an epimerization at carbon 6 of the heptose. The chain is ADP-L-glycero-D-manno-heptose-6-epimerase from Shigella boydii serotype 18 (strain CDC 3083-94 / BS512).